The following is an 870-amino-acid chain: MNSNLPAENLTIAVNMTKTLPTAVTHGFNSTNDPPSMSITRLFPALLECFGIVLCGYIAGRANVITSTQAKGLGNFVSRFALPALLFKNMVVLNFSNVDWSFLYSILIAKASVFFIVCVLTLLVASPDSRFSKAGLFPIFATQSNDFALGYPIVEALYQTTYPEYLQYIYLVAPISLMMLNPIGFIFCEIQKWKDTQNASQNKIKIVGLGLLRVLQNPIVFMVFIGIAFNFILDRKVPVYVENFLDGLGNSFSGSALFYLGLTMVGKIKRLKKSAFVVLILLITAKLLVLPLLCREMVELLDKGDSVVNHTSLSNYAFLYGVFPVAPGVAIFATQFNMEVEIITSGMVISTFVSAPIMYVSAWLLTFPTMDPKPLAYAIQNVSFDISIVSLISLIWSLAILLLSKKYKQLPHMLTTNLLIAQSIVCAGMMIWNFVKEKNFVGQILVFVLLYSSLYSTYLWTGLLAISLFLLKKRERVQIPVGIIIISGWGIPALLVGVLLITGKHNGDSIDSAFFYGKEQMITTAVTLFCSILIAGISLMCMNQTAQAGSYEGFDQSQSHKVVEPGNTAFEESPAPVNEPELFTSSIPETSCCSCSMGNGELHCPSIEPIANTSTSEPVIPSFEKNNHCVSRCNSQSCILAQEEEQYLQSGDQQLTRHVLLCLLLIIGLFANLSSCLWWLFNQEPGRLYVELQFFCAVFNFGQGFISFGIFGLDKHLIILPFKRRLEFLWNNKDTAENRDSPVSEEIKMTCQQFIHYHRDLCIRNIVKERRCGAKTSAGTFCGCDLVSWLIEVGLASDRGEAVIYGDRLVQGGVIQHITNEYEFRDEYLFYRFLQKSPEQSPPAINANTLQQERYKEIEHSSPPSHSPKT.

The Lumenal portion of the chain corresponds to 1–38 (MNSNLPAENLTIAVNMTKTLPTAVTHGFNSTNDPPSMS). Residues 1-370 (MNSNLPAENL…SAWLLTFPTM (370 aa)) are PIN-like transporter. 3 N-linked (GlcNAc...) asparagine glycosylation sites follow: asparagine 9, asparagine 15, and asparagine 29. A helical membrane pass occupies residues 39–59 (ITRLFPALLECFGIVLCGYIA). Positions 43 and 57 each coordinate cholesterol. Residues 60 to 79 (GRANVITSTQAKGLGNFVSR) lie on the Cytoplasmic side of the membrane. A helical transmembrane segment spans residues 80 to 100 (FALPALLFKNMVVLNFSNVDW). Residues 101–104 (SFLY) lie on the Lumenal side of the membrane. Residues 105–125 (SILIAKASVFFIVCVLTLLVA) form a helical membrane-spanning segment. Residues 126–133 (SPDSRFSK) are Cytoplasmic-facing. Residues 134–154 (AGLFPIFATQSNDFALGYPIV) traverse the membrane as a discontinuously helical segment. Topologically, residues 155 to 167 (EALYQTTYPEYLQ) are lumenal. A helical membrane pass occupies residues 168–188 (YIYLVAPISLMMLNPIGFIFC). Residues 189 to 213 (EIQKWKDTQNASQNKIKIVGLGLLR) lie on the Cytoplasmic side of the membrane. Residues 214 to 234 (VLQNPIVFMVFIGIAFNFILD) form a discontinuously helical membrane-spanning segment. Topologically, residues 235–243 (RKVPVYVEN) are lumenal. A discontinuously helical transmembrane segment spans residues 244-264 (FLDGLGNSFSGSALFYLGLTM). At 265-273 (VGKIKRLKK) the chain is on the cytoplasmic side. Cholesterol-binding residues include glycine 266, lysine 267, and isoleucine 268. The chain crosses the membrane as a helical span at residues 274–294 (SAFVVLILLITAKLLVLPLLC). Over 295-315 (REMVELLDKGDSVVNHTSLSN) the chain is Lumenal. A glycan (N-linked (GlcNAc...) asparagine) is linked at asparagine 309. The chain crosses the membrane as a discontinuously helical span at residues 316–336 (YAFLYGVFPVAPGVAIFATQF). The Cytoplasmic portion of the chain corresponds to 337–346 (NMEVEIITSG). Residues 347–367 (MVISTFVSAPIMYVSAWLLTF) traverse the membrane as a helical segment. Over 368-381 (PTMDPKPLAYAIQN) the chain is Lumenal. The tract at residues 380–717 (QNVSFDISIV…FGIFGLDKHL (338 aa)) is GPCR. N-linked (GlcNAc...) asparagine glycosylation occurs at asparagine 381. Residues 382-402 (VSFDISIVSLISLIWSLAILL) form a helical membrane-spanning segment. The Cytoplasmic segment spans residues 403-414 (LSKKYKQLPHML). Residues 415–435 (TTNLLIAQSIVCAGMMIWNFV) traverse the membrane as a helical segment. The Lumenal segment spans residues 436–438 (KEK). Residues 439 to 459 (NFVGQILVFVLLYSSLYSTYL) form a helical membrane-spanning segment. Residues 460–480 (WTGLLAISLFLLKKRERVQIP) are Cytoplasmic-facing. Residues 481–501 (VGIIIISGWGIPALLVGVLLI) form a helical membrane-spanning segment. Over 502–520 (TGKHNGDSIDSAFFYGKEQ) the chain is Lumenal. Residues 521–541 (MITTAVTLFCSILIAGISLMC) traverse the membrane as a helical segment. Topologically, residues 542 to 660 (MNQTAQAGSY…GDQQLTRHVL (119 aa)) are cytoplasmic. Arginine 657 contacts cholesterol. A helical membrane pass occupies residues 661 to 681 (LCLLLIIGLFANLSSCLWWLF). At 682 to 691 (NQEPGRLYVE) the chain is on the lumenal side. The helical transmembrane segment at 692 to 712 (LQFFCAVFNFGQGFISFGIFG) threads the bilayer. Residues 713-870 (LDKHLIILPF…SSPPSHSPKT (158 aa)) lie on the Cytoplasmic side of the membrane. The DEP domain occupies 757–835 (YHRDLCIRNI…DEYLFYRFLQ (79 aa)).

In terms of assembly, homodimer; via the transporter region and DEP domain. Interacts with the GATOR1 complex and prevents interaction between GATOR1 and KICSTOR; this interaction is disrupted upon cholesterol starvation.

The protein localises to the lysosome membrane. Cholesterol-binding protein that acts as a regulator of mTORC1 signaling pathway. Acts as a sensor of cholesterol to signal cholesterol sufficiency to mTORC1: in presence of cholesterol, binds cholesterol, leading to disruption of the interaction between the GATOR1 and KICSTOR complexes and promotion of mTORC1 signaling. Upon cholesterol starvation, GPR155/LYCHOS is unable to perturb the association between GATOR1 and KICSTOR, leading to mTORC1 signaling inhibition. Binds indole-3-acetic acid and may play a role in tryptophan metabolism. In Homo sapiens (Human), this protein is Lysosomal cholesterol signaling protein.